Consider the following 316-residue polypeptide: Methionyl-tRNA formyltransferase (316 aa).

Residue 112-115 (SLLP) coordinates (6S)-5,6,7,8-tetrahydrofolate.

It belongs to the Fmt family.

It catalyses the reaction L-methionyl-tRNA(fMet) + (6R)-10-formyltetrahydrofolate = N-formyl-L-methionyl-tRNA(fMet) + (6S)-5,6,7,8-tetrahydrofolate + H(+). Functionally, attaches a formyl group to the free amino group of methionyl-tRNA(fMet). The formyl group appears to play a dual role in the initiator identity of N-formylmethionyl-tRNA by promoting its recognition by IF2 and preventing the misappropriation of this tRNA by the elongation apparatus. In Haemophilus ducreyi (strain 35000HP / ATCC 700724), this protein is Methionyl-tRNA formyltransferase.